The following is a 331-amino-acid chain: Type 2 lactosamine alpha-2,3-sialyltransferase (331 aa).

Residues 1–4 (MRGY) are Cytoplasmic-facing. The helical; Signal-anchor for type II membrane protein transmembrane segment at 5-25 (LVAIFLSAVFLYYVLHCILWG) threads the bilayer. At 26 to 331 (TNVYWAAPVE…KNLVINLTQD (306 aa)) the chain is on the lumenal side. N-linked (GlcNAc...) asparagine glycans are attached at residues asparagine 129, asparagine 181, asparagine 282, asparagine 295, asparagine 308, and asparagine 327.

The protein belongs to the glycosyltransferase 29 family.

The protein resides in the golgi apparatus membrane. It catalyses the reaction a neolactoside nLc4Cer(d18:1(4E)) + CMP-N-acetyl-beta-neuraminate = a neolactoside IV(3)-alpha-NeuAc-nLc4Cer(d18:1(4E)) + CMP + H(+). The enzyme catalyses a beta-D-galactosyl-(1-&gt;4)-N-acetyl-beta-D-glucosaminyl derivative + CMP-N-acetyl-beta-neuraminate = an N-acetyl-alpha-neuraminyl-(2-&gt;3)-beta-D-galactosyl-(1-&gt;4)-N-acetyl-beta-D-glucosaminyl derivative + CMP + H(+). It carries out the reaction a neolactoside nLc6Cer(d18:1(4E)) + CMP-N-acetyl-beta-neuraminate = a neolactoside VI(3)-alpha-NeuNAc-nLc6Cer(d18:1(4E)) + CMP + H(+). Its function is as follows. Transfers the sialyl residue from CMP-N-acetyl-beta-neuraminate to the terminal galactose residue on sugar chains of glycoproteins and glycolipids. It's alpha-2,3-sialyltransferase activity is specific toward type II glycan chains (Galbeta1-4GlcNAc) on glycoproteins and glycolipids such as neolactosides nLc4Cer and nLc6Cer, whose sialyl-products serve as precursors for the Lewis X antigen. Critically involved in the synthesis of functional selectin ligands needed for neutrophil recruitment during inflammation and lymphocyte homing to the lymph nodes. The protein is Type 2 lactosamine alpha-2,3-sialyltransferase (ST3GAL6) of Pongo abelii (Sumatran orangutan).